We begin with the raw amino-acid sequence, 418 residues long: Gamma-glutamyl phosphate reductase (418 aa).

It belongs to the gamma-glutamyl phosphate reductase family.

It localises to the cytoplasm. The catalysed reaction is L-glutamate 5-semialdehyde + phosphate + NADP(+) = L-glutamyl 5-phosphate + NADPH + H(+). The protein operates within amino-acid biosynthesis; L-proline biosynthesis; L-glutamate 5-semialdehyde from L-glutamate: step 2/2. Functionally, catalyzes the NADPH-dependent reduction of L-glutamate 5-phosphate into L-glutamate 5-semialdehyde and phosphate. The product spontaneously undergoes cyclization to form 1-pyrroline-5-carboxylate. This Moorella thermoacetica (strain ATCC 39073 / JCM 9320) protein is Gamma-glutamyl phosphate reductase.